The sequence spans 277 residues: Putative serine/threonine-protein kinase PRKY (277 aa).

Low complexity predominate over residues 1 to 12; it reads MEAPGPAQAAAA. A disordered region spans residues 1 to 40; it reads MEAPGPAQAAAAESNSREVTEDAADWAPALCPSPEARSPE. Positions 49–277 constitute a Protein kinase domain; it reads CDALVTMGTG…DFHVKTGRMM (229 aa). Residues 55–63 and Lys-78 contribute to the ATP site; that span reads MGTGTFGRV. The active-site Proton acceptor is Asp-172. A Phosphothreonine modification is found at Thr-203.

Belongs to the protein kinase superfamily. AGC Ser/Thr protein kinase family. cAMP subfamily. As to expression, ubiquitous.

The enzyme catalyses L-seryl-[protein] + ATP = O-phospho-L-seryl-[protein] + ADP + H(+). It catalyses the reaction L-threonyl-[protein] + ATP = O-phospho-L-threonyl-[protein] + ADP + H(+). This is Putative serine/threonine-protein kinase PRKY (PRKY) from Homo sapiens (Human).